Here is a 475-residue protein sequence, read N- to C-terminus: ATP synthase subunit beta, chloroplastic (475 aa).

155–162 (GGAGVGKT) provides a ligand contact to ATP.

The protein belongs to the ATPase alpha/beta chains family. F-type ATPases have 2 components, CF(1) - the catalytic core - and CF(0) - the membrane proton channel. CF(1) has five subunits: alpha(3), beta(3), gamma(1), delta(1), epsilon(1). CF(0) has four main subunits: a(1), b(1), b'(1) and c(9-12).

Its subcellular location is the plastid. The protein localises to the chloroplast thylakoid membrane. The enzyme catalyses ATP + H2O + 4 H(+)(in) = ADP + phosphate + 5 H(+)(out). Its function is as follows. Produces ATP from ADP in the presence of a proton gradient across the membrane. The catalytic sites are hosted primarily by the beta subunits. The polypeptide is ATP synthase subunit beta, chloroplastic (Porphyra purpurea (Red seaweed)).